Reading from the N-terminus, the 687-residue chain is Acetolactate synthase catalytic subunit, mitochondrial (687 aa).

The N-terminal 90 residues, 1–90, are a transit peptide targeting the mitochondrion; sequence MIRQSTLKNF…AEPDMDTSFV (90 aa). Residues 43–52 are compositionally biased toward low complexity; it reads YYSASPLPAS. The disordered stretch occupies residues 43-68; the sequence is YYSASPLPASKRPEPAPSFNVDPLEQ. E139 contributes to the thiamine diphosphate binding site. FAD is bound by residues R241, 355–376, and 407–426; these read HGCA…VGAR and EVSP…VEGD. The tract at residues 499-579 is thiamine pyrophosphate binding; the sequence is QHQMWAAQHW…VKILILNNEE (81 aa). Residues D550, N577, and E579 each contribute to the Mg(2+) site.

The protein belongs to the TPP enzyme family. Homodimer. The acetolactate synthase complex contains the catalytic subunit ILV2 and the regulatory small subunit ILV6. It depends on Mg(2+) as a cofactor. Requires thiamine diphosphate as cofactor.

The protein localises to the mitochondrion. It carries out the reaction 2 pyruvate + H(+) = (2S)-2-acetolactate + CO2. It catalyses the reaction 2-oxobutanoate + pyruvate + H(+) = (S)-2-ethyl-2-hydroxy-3-oxobutanoate + CO2. It participates in amino-acid biosynthesis; L-isoleucine biosynthesis; L-isoleucine from 2-oxobutanoate: step 1/4. The protein operates within amino-acid biosynthesis; L-valine biosynthesis; L-valine from pyruvate: step 1/4. With respect to regulation, the regulatory subunit ILV6 stimulates enzymatic activity seven- to tenfold and confers sensitivity to inhibition by valine and activation by ATP. Catalytic subunit of mitochondrial acetolactate synthase, which catalyzes the first of a series of common steps in the biosynthesis of the branched-chain amino acids. Catalyzes the irreversible decarboxylation of pyruvate to a bound hydroxyethyl group that then condenses with either a second pyruvate molecule to form 2-acetolactate (AL) or with 2-ketobutyrate to form 2-aceto-2-hydroxybutyrate (AHB). The first product is the precursor for valine and leucine biosynthesis, while the second leads to isoleucine. The sequence is that of Acetolactate synthase catalytic subunit, mitochondrial (ILV2) from Saccharomyces cerevisiae (strain ATCC 204508 / S288c) (Baker's yeast).